A 953-amino-acid polypeptide reads, in one-letter code: Ubiquitin carboxyl-terminal hydrolase CYLD (953 aa).

An interaction with TRIP region spans residues 106–590 (CEERLSLFRN…LEIMIGKKKG (485 aa)). CAP-Gly domains follow at residues 153-198 (LAER…VFVA) and 253-286 (DVLP…VQLC). Residues 318–350 (FMSRGVGDKGSSSHNKPKVTGSTSDPGSRNRSE) form a disordered region. Residues 327–346 (GSSSHNKPKVTGSTSDPGSR) show a composition bias toward polar residues. Position 384 is a phosphoserine (Ser384). The interval 387–410 (EMSSDFGHSSPPPQPPSMNSLSSE) is disordered. Residues 391-466 (DFGHSSPPPQ…MPSSSGNAHG (76 aa)) form an interaction with TRAF2 region. A phosphoserine mark is found at Ser415 and Ser419. Positions 467–681 (LEVGSLAEVK…FTSEEKDPEE (215 aa)) are interaction with IKBKG/NEMO. The CAP-Gly 3 domain maps to 489–532 (GQPPGLSDVLAGLELEDECAGCTDGTFRGTRYFTCALKKALFVK). In terms of domain architecture, USP spans 589–947 (KGIQGHYNSC…DAYMCMYQSP (359 aa)). Cys598 (nucleophile) is an active-site residue. Residues 778–830 (LEDTPRQCRICGGLAMYECRECYDDPDISAGKIKQFCKTCSTQVHLHPRRLNH) form a B-box region. Positions 785, 788, 796, 799, 814, 817, 822, and 830 each coordinate Zn(2+). The active-site Proton acceptor is His868.

The protein belongs to the peptidase C19 family. As to quaternary structure, interacts (via CAP-Gly domain) with IKBKG/NEMO (via proline-rich C-terminal region). Interacts with TRAF2 and TRIP. Interacts with PLK1, DVL1, DVL3, MAVS, TBK1, IKKE and RIGI. Interacts (via CAP-Gly domain) with microtubules. Interacts with HDAC6 and BCL3. Interacts with MAP3K7. Identified in a complex with TRAF6 and SQSTM1. Interacts with OPTN and SQSTM1. Interacts with CEP350. Interacts with RNF31; the interaction is indirect and is mediated via SPATA2. Interacts with SPATA2 (via the PUB domain); the interaction is direct and recruits CYLD to the LUBAC complex, thereby regulating TNF-alpha-induced necroptosis. Post-translationally, phosphorylated on several serine residues by IKKA and/or IKKB in response to immune stimuli. Phosphorylation requires IKBKG. Phosphorylation abolishes TRAF2 deubiquitination, interferes with the activation of Jun kinases, and strongly reduces CD40-dependent gene activation by NF-kappa-B. In terms of processing, ubiquitinated. Polyubiquitinated in hepatocytes treated with palmitic acid. Ubiquitination is mediated by E3 ligase TRIM47 and leads to proteasomal degradation.

The protein resides in the cytoplasm. Its subcellular location is the perinuclear region. It is found in the cytoskeleton. The protein localises to the cell membrane. It localises to the microtubule organizing center. The protein resides in the centrosome. Its subcellular location is the spindle. It is found in the cilium basal body. It catalyses the reaction Thiol-dependent hydrolysis of ester, thioester, amide, peptide and isopeptide bonds formed by the C-terminal Gly of ubiquitin (a 76-residue protein attached to proteins as an intracellular targeting signal).. Functionally, deubiquitinase that specifically cleaves 'Lys-63'- and linear 'Met-1'-linked polyubiquitin chains and is involved in NF-kappa-B activation and TNF-alpha-induced necroptosis. Negatively regulates NF-kappa-B activation by deubiquitinating upstream signaling factors. Contributes to the regulation of cell survival, proliferation and differentiation via its effects on NF-kappa-B activation. Negative regulator of Wnt signaling. Inhibits HDAC6 and thereby promotes acetylation of alpha-tubulin and stabilization of microtubules. Plays a role in the regulation of microtubule dynamics, and thereby contributes to the regulation of cell proliferation, cell polarization, cell migration, and angiogenesis. Required for normal cell cycle progress and normal cytokinesis. Inhibits nuclear translocation of NF-kappa-B. Plays a role in the regulation of inflammation and the innate immune response, via its effects on NF-kappa-B activation. Dispensable for the maturation of intrathymic natural killer cells, but required for the continued survival of immature natural killer cells. Negatively regulates TNFRSF11A signaling and osteoclastogenesis. Involved in the regulation of ciliogenesis, allowing ciliary basal bodies to migrate and dock to the plasma membrane; this process does not depend on NF-kappa-B activation. Ability to remove linear ('Met-1'-linked) polyubiquitin chains regulates innate immunity and TNF-alpha-induced necroptosis: recruited to the LUBAC complex via interaction with SPATA2 and restricts linear polyubiquitin formation on target proteins. Regulates innate immunity by restricting linear polyubiquitin formation on RIPK2 in response to NOD2 stimulation. Involved in TNF-alpha-induced necroptosis by removing linear ('Met-1'-linked) polyubiquitin chains from RIPK1, thereby regulating the kinase activity of RIPK1. Negatively regulates intestinal inflammation by removing 'Lys-63' linked polyubiquitin chain of NLRP6, thereby reducing the interaction between NLRP6 and PYCARD/ASC and formation of the NLRP6 inflammasome. Does not catalyze deubiquitination of heterotypic 'Lys-63'-/'Lys-48'-linked branched ubiquitin chains. Removes 'Lys-63' linked polyubiquitin chain of MAP3K7, which inhibits phosphorylation and blocks downstream activation of the JNK-p38 kinase cascades. Also removes 'Lys-63'-linked polyubiquitin chains of MAP3K1 and MA3P3K3, which inhibit their interaction with MAP2K1 and MAP2K2. The sequence is that of Ubiquitin carboxyl-terminal hydrolase CYLD (Cyld) from Rattus norvegicus (Rat).